The chain runs to 860 residues: Photoactivated adenylate cyclase subunit beta (860 aa).

The 94-residue stretch at 56–149 (LRRLMYLSKS…GRMYGDWHMK (94 aa)) folds into the BLUF 1 domain. A Guanylate cyclase 1 domain is found at 205–333 (VVTFIYLVEF…DCINTTSRIA (129 aa)). The tract at residues 420–443 (RPPIFDDTPKGKPRPRTPGYGGRQ) is disordered. Residues 471–563 (LTTLTYISQA…RAYPAEWTLT (93 aa)) enclose the BLUF 2 domain. The 130-residue stretch at 619 to 748 (VMLATDICSF…AVSARVMEVE (130 aa)) folds into the Guanylate cyclase 2 domain. Residues 819–860 (KPLALEPEEAKQDYRVSPGRMRHGDSGRRSNSAQGKRSTQVR) form a disordered region. A compositionally biased stretch (polar residues) spans 847–860 (RSNSAQGKRSTQVR).

Belongs to the adenylyl cyclase class-4/guanylyl cyclase family. Heterotetramer of two alpha and two beta subunits. FAD serves as cofactor.

Its subcellular location is the cell projection. It is found in the cilium. The protein resides in the flagellum. It carries out the reaction ATP = 3',5'-cyclic AMP + diphosphate. In terms of biological role, acts as a photoreceptor for the step-up photophobic response. In Euglena longa (Euglenophycean alga), this protein is Photoactivated adenylate cyclase subunit beta.